Reading from the N-terminus, the 246-residue chain is 1-(5-phosphoribosyl)-5-[(5-phosphoribosylamino)methylideneamino] imidazole-4-carboxamide isomerase (246 aa).

The Proton acceptor role is filled by Asp8. Asp129 acts as the Proton donor in catalysis.

This sequence belongs to the HisA/HisF family.

It is found in the cytoplasm. It catalyses the reaction 1-(5-phospho-beta-D-ribosyl)-5-[(5-phospho-beta-D-ribosylamino)methylideneamino]imidazole-4-carboxamide = 5-[(5-phospho-1-deoxy-D-ribulos-1-ylimino)methylamino]-1-(5-phospho-beta-D-ribosyl)imidazole-4-carboxamide. The protein operates within amino-acid biosynthesis; L-histidine biosynthesis; L-histidine from 5-phospho-alpha-D-ribose 1-diphosphate: step 4/9. This Methylocella silvestris (strain DSM 15510 / CIP 108128 / LMG 27833 / NCIMB 13906 / BL2) protein is 1-(5-phosphoribosyl)-5-[(5-phosphoribosylamino)methylideneamino] imidazole-4-carboxamide isomerase.